The primary structure comprises 790 residues: B3 domain-containing transcription repressor VAL1 (790 aa).

Residues 234-260 (KPSRPAISTPPVASKSAQARIGRPPVE) are disordered. The segment at residues 295 to 396 (FEKTLSASDA…KLIMGSRKAA (102 aa)) is a DNA-binding region (TF-B3). 2 disordered regions span residues 400 to 429 (DMQG…SING) and 446 to 468 (NLNS…EKKR). Residues 405 to 429 (GLTNGTSTEDTSSSGVTENPPSING) show a composition bias toward polar residues. The CW-type zinc finger occupies 538–588 (SGEQERWATCDDCSKWRRLPVDALLSFKWTCIDNVWDVSRCSCSAPEESLK). Positions 547, 550, 568, and 580 each coordinate Zn(2+). Residues 685–732 (LMMRRKKKQLERDVTAAEDKKKKDMELAESDKSKEEKEVNTARIDLNS) are a coiled coil. Residues 689 to 737 (RKKKQLERDVTAAEDKKKKDMELAESDKSKEEKEVNTARIDLNSDPYNK) are disordered. Residues 694-724 (LERDVTAAEDKKKKDMELAESDKSKEEKEVN) are compositionally biased toward basic and acidic residues.

In terms of assembly, interacts with SNL1. As to expression, expressed in flowers and at lower levels in roots, stems and leaves.

Its subcellular location is the nucleus. Functionally, transcriptional repressor of gene expression involved in embryonic pathways, such as LEC1, ABI3, and FUS3. Repressor of the sugar-inducible genes involved in the seed maturation program in seedlings. Plays an essential role in regulating the transition from seed maturation to seedling growth. Functionally redundant with VAL2/HSL1. This chain is B3 domain-containing transcription repressor VAL1 (VAL1), found in Arabidopsis thaliana (Mouse-ear cress).